The following is a 518-amino-acid chain: F-box protein At1g47056 (518 aa).

One can recognise an F-box domain in the interval 37–82; it reads PDYTSSLPDECLALVFQFLNSGNRKRCALVCRRWMIVEGQNRYRLS.

In Arabidopsis thaliana (Mouse-ear cress), this protein is F-box protein At1g47056.